The following is a 405-amino-acid chain: CCA-adding enzyme (405 aa).

Residues glycine 8 and arginine 11 each contribute to the ATP site. CTP is bound by residues glycine 8 and arginine 11. The Mg(2+) site is built by glutamate 21 and aspartate 23. Positions 91, 137, and 140 each coordinate ATP. Arginine 91, arginine 137, and arginine 140 together coordinate CTP. Residues 220 to 326 (PLSHGLSTLS…LNFFDELDLW (107 aa)) form the HD domain.

It belongs to the tRNA nucleotidyltransferase/poly(A) polymerase family. Bacterial CCA-adding enzyme type 2 subfamily. Requires Mg(2+) as cofactor.

It catalyses the reaction a tRNA precursor + 2 CTP + ATP = a tRNA with a 3' CCA end + 3 diphosphate. It carries out the reaction a tRNA with a 3' CCA end + 2 CTP + ATP = a tRNA with a 3' CCACCA end + 3 diphosphate. Catalyzes the addition and repair of the essential 3'-terminal CCA sequence in tRNAs without using a nucleic acid template. Adds these three nucleotides in the order of C, C, and A to the tRNA nucleotide-73, using CTP and ATP as substrates and producing inorganic pyrophosphate. tRNA 3'-terminal CCA addition is required both for tRNA processing and repair. Also involved in tRNA surveillance by mediating tandem CCA addition to generate a CCACCA at the 3' terminus of unstable tRNAs. While stable tRNAs receive only 3'-terminal CCA, unstable tRNAs are marked with CCACCA and rapidly degraded. This chain is CCA-adding enzyme, found in Hamiltonella defensa subsp. Acyrthosiphon pisum (strain 5AT).